We begin with the raw amino-acid sequence, 235 residues long: Peptidase E (235 aa).

Residues Ser-122, Asp-137, and His-159 each act as charge relay system in the active site.

This sequence belongs to the peptidase S51 family.

The protein resides in the cytoplasm. The catalysed reaction is Dipeptidase E catalyzes the hydrolysis of dipeptides Asp-|-Xaa. It does not act on peptides with N-terminal Glu, Asn or Gln, nor does it cleave isoaspartyl peptides.. Functionally, hydrolyzes dipeptides containing N-terminal aspartate residues. May play a role in allowing the cell to use peptide aspartate to spare carbon otherwise required for the synthesis of the aspartate family of amino acids. In Shewanella amazonensis (strain ATCC BAA-1098 / SB2B), this protein is Peptidase E.